Here is a 214-residue protein sequence, read N- to C-terminus: Calcineurin B-like protein 8 (214 aa).

EF-hand domains are found at residues Glu35–Ser70, Met71–Tyr106, Pro108–Glu143, and Ser152–Ile187. Positions 165, 167, 169, 171, and 176 each coordinate Ca(2+). Ser205 is modified (phosphoserine).

It belongs to the calcineurin regulatory subunit family. Interacts with CIPK23. Interacts with CIPK14 at the cell membrane exclusively.

The protein resides in the cytoplasm. The protein localises to the nucleus. It is found in the cell membrane. Acts as a calcium sensor. CBL proteins interact with CIPK serine-threonine protein kinases. Binding of a CBL protein to the regulatory NAF domain of a CIPK protein lead to the activation of the kinase in a calcium-dependent manner. The sequence is that of Calcineurin B-like protein 8 (CBL8) from Arabidopsis thaliana (Mouse-ear cress).